The following is a 908-amino-acid chain: Protein translocase subunit SecA (908 aa).

Residues Gln-87, 105–109, and Asp-511 contribute to the ATP site; that span reads GEGKT. Residues 559–570 show a composition bias toward basic and acidic residues; that stretch reads ERHESRRIDNQL. Disordered regions lie at residues 559–582 and 841–908; these read ERHESRRIDNQLRGRSGRQGDPGS and RRRR…GRLE. Over residues 847–856 the composition is skewed to low complexity; it reads LAQQMQRAQA. The segment covering 862-873 has biased composition (acidic residues); sequence TEEDSDAEEQAE. Positions 892, 894, 903, and 904 each coordinate Zn(2+). Residues 898–908 show a composition bias toward basic residues; that stretch reads KKYKQCHGRLE.

It belongs to the SecA family. Monomer and homodimer. Part of the essential Sec protein translocation apparatus which comprises SecA, SecYEG and auxiliary proteins SecDF-YajC and YidC. The cofactor is Zn(2+).

It localises to the cell inner membrane. The protein localises to the cytoplasm. The enzyme catalyses ATP + H2O + cellular proteinSide 1 = ADP + phosphate + cellular proteinSide 2.. In terms of biological role, part of the Sec protein translocase complex. Interacts with the SecYEG preprotein conducting channel. Has a central role in coupling the hydrolysis of ATP to the transfer of proteins into and across the cell membrane, serving both as a receptor for the preprotein-SecB complex and as an ATP-driven molecular motor driving the stepwise translocation of polypeptide chains across the membrane. This chain is Protein translocase subunit SecA, found in Hahella chejuensis (strain KCTC 2396).